The chain runs to 545 residues: Chaperonin GroEL (545 aa).

Residues 29–32 (TLGP), K50, 86–90 (DGTTT), G415, and D495 each bind ATP.

Belongs to the chaperonin (HSP60) family. Forms a cylinder of 14 subunits composed of two heptameric rings stacked back-to-back. Interacts with the co-chaperonin GroES.

It localises to the cytoplasm. The enzyme catalyses ATP + H2O + a folded polypeptide = ADP + phosphate + an unfolded polypeptide.. Together with its co-chaperonin GroES, plays an essential role in assisting protein folding. The GroEL-GroES system forms a nano-cage that allows encapsulation of the non-native substrate proteins and provides a physical environment optimized to promote and accelerate protein folding. The sequence is that of Chaperonin GroEL from Porphyromonas gingivalis (strain ATCC BAA-308 / W83).